A 301-amino-acid chain; its full sequence is Ribosomal protein L11 methyltransferase (301 aa).

S-adenosyl-L-methionine is bound by residues Thr146, Gly167, Asp189, and Asn234.

Belongs to the methyltransferase superfamily. PrmA family.

It localises to the cytoplasm. It catalyses the reaction L-lysyl-[protein] + 3 S-adenosyl-L-methionine = N(6),N(6),N(6)-trimethyl-L-lysyl-[protein] + 3 S-adenosyl-L-homocysteine + 3 H(+). Methylates ribosomal protein L11. This chain is Ribosomal protein L11 methyltransferase, found in Acinetobacter baumannii (strain SDF).